The primary structure comprises 482 residues: G2/mitotic-specific cyclin cdc13 (482 aa).

3 stretches are compositionally biased toward polar residues: residues 35–55 (LHSS…STNV), 78–92 (SKNT…SVST), and 118–140 (SVFN…SVST). Positions 35-140 (LHSSENSLVN…LSTKSHSVST (106 aa)) are disordered. Residues 206–332 (DIFEYLNELE…ILRVLEFNLA (127 aa)) enclose the Cyclin N-terminal domain.

This sequence belongs to the cyclin family. Cyclin AB subfamily. In terms of assembly, interacts with cdc2. Interacts with rum1. Associates with microtubules. Also interacts with cdc11.

It localises to the nucleus. Its subcellular location is the cytoplasm. It is found in the cytoskeleton. The protein localises to the microtubule organizing center. The protein resides in the spindle pole body. Its function is as follows. Essential for the control of the cell cycle at the G2/M (mitosis) transition. Interacts with the cdc2 protein kinase to form MPF. G2/M cyclins accumulate steadily during G2 and are abruptly destroyed at mitosis. Involved in the reorganization of the cytoskeleton on transition from G2 to mitosis. Association with rum1 promotes its proteolysis during G1. Also essential for initiation of meiosis II. The polypeptide is G2/mitotic-specific cyclin cdc13 (Schizosaccharomyces pombe (strain 972 / ATCC 24843) (Fission yeast)).